The following is a 536-amino-acid chain: MNAAVFSPSALSLPISFSKTRSSFLSRKKGVKGEFRVFAVFGDESGLVEKKSQWRPLFDVEDPRSKAPPYKGKFLDVNQAIEVARFDIQYLDWRARQDLLTIMILHDKVVDVLNPLAREYKSIGTVKKELAGLQEELSKAHQQVHISEARVSTALDKLAHMEELVNDRLLPGRVVTELDKPSSSTTASAVELDREKTNTGAKSLNVSGPVPPYSPHLKNFWYPVAFTADLKHDTMVPIECFEQPWVIFRGEDGKPGCVRNTCAHRACPLDLGTVNEGRIQCPYHGWEYSTDGECKKMPSTKLLKVKIKSLPCLEQEGMIWIWPGDEPPAPILPSLQPPSGFLIHAELVMDLPVEHGLLLDNLLDLAHAPFTHTSTFAKGWSVPSLVKFLTPTSGLQGYWDPYPIDMEFKPPCIVLSTIGISKPGKLEGKSTQQCATHLHQLHVCLPSSKNKTRLLYRMSLDFAPILKNLPFMEHLWRHFAEQVLNEDLRLVLGQQERMLNGANIWNLPVAYDKLGVRYRLWRNAVDRGDDKLPFSG.

A chloroplast-targeting transit peptide spans 1–36 (MNAAVFSPSALSLPISFSKTRSSFLSRKKGVKGEFR). Positions 123-150 (IGTVKKELAGLQEELSKAHQQVHISEAR) form a coiled coil. Positions 221–321 (WYPVAFTADL…CLEQEGMIWI (101 aa)) constitute a Rieske domain. Positions 262, 264, 281, and 284 each coordinate [2Fe-2S] cluster. Positions 360, 364, 367, and 372 each coordinate Fe cation.

Its subcellular location is the plastid. It localises to the chloroplast membrane. The protein resides in the chloroplast thylakoid membrane. It carries out the reaction chlorophyllide a + 2 NADPH + 2 O2 + 2 H(+) = chlorophyllide b + 2 NADP(+) + 3 H2O. Its pathway is porphyrin-containing compound metabolism; chlorophyll biosynthesis. Its function is as follows. Catalyzes a two-step oxygenase reaction involved in the synthesis of chlorophyll b. Acts specifically on the non-esterified chlorophyllide a and not on chlorophyll a. This Arabidopsis thaliana (Mouse-ear cress) protein is Chlorophyllide a oxygenase, chloroplastic (CAO).